Reading from the N-terminus, the 1342-residue chain is DNA-directed RNA polymerase subunit beta (1342 aa).

It belongs to the RNA polymerase beta chain family. As to quaternary structure, the RNAP catalytic core consists of 2 alpha, 1 beta, 1 beta' and 1 omega subunit. When a sigma factor is associated with the core the holoenzyme is formed, which can initiate transcription.

The enzyme catalyses RNA(n) + a ribonucleoside 5'-triphosphate = RNA(n+1) + diphosphate. In terms of biological role, DNA-dependent RNA polymerase catalyzes the transcription of DNA into RNA using the four ribonucleoside triphosphates as substrates. The chain is DNA-directed RNA polymerase subunit beta from Cronobacter sakazakii (strain ATCC BAA-894) (Enterobacter sakazakii).